The sequence spans 361 residues: Phospho-N-acetylmuramoyl-pentapeptide-transferase (361 aa).

The next 10 membrane-spanning stretches (helical) occupy residues 28-48 (LAAL…IRSL), 73-93 (TMGG…WADL), 97-117 (YIWL…VDDY), 134-154 (FFWQ…TAEL), 168-188 (VAIP…IVGS), 200-220 (GLAI…AYVA), 237-257 (AGEL…FLWF), 264-284 (VFMG…ITVI), 289-309 (IVLV…MIQV), and 338-358 (QVVV…LSTL).

Belongs to the glycosyltransferase 4 family. MraY subfamily. The cofactor is Mg(2+).

It is found in the cell inner membrane. It carries out the reaction UDP-N-acetyl-alpha-D-muramoyl-L-alanyl-gamma-D-glutamyl-meso-2,6-diaminopimeloyl-D-alanyl-D-alanine + di-trans,octa-cis-undecaprenyl phosphate = di-trans,octa-cis-undecaprenyl diphospho-N-acetyl-alpha-D-muramoyl-L-alanyl-D-glutamyl-meso-2,6-diaminopimeloyl-D-alanyl-D-alanine + UMP. Its pathway is cell wall biogenesis; peptidoglycan biosynthesis. In terms of biological role, catalyzes the initial step of the lipid cycle reactions in the biosynthesis of the cell wall peptidoglycan: transfers peptidoglycan precursor phospho-MurNAc-pentapeptide from UDP-MurNAc-pentapeptide onto the lipid carrier undecaprenyl phosphate, yielding undecaprenyl-pyrophosphoryl-MurNAc-pentapeptide, known as lipid I. The polypeptide is Phospho-N-acetylmuramoyl-pentapeptide-transferase (Nitrosomonas eutropha (strain DSM 101675 / C91 / Nm57)).